We begin with the raw amino-acid sequence, 496 residues long: SRCTHLENRDFVTGTQGTTRVTLVLELGGCVTITAEGKPSVDVWLDAIYQESPAKTREYCLHAKLSETKVAARCPTMGPAALAEERQIGTVCKRDQSDRGWGNHCGLFGKGSIVACVKAACEAKKKATGYVYDANKIVYTVKVEPHTGDYVAANETHKGRKTATFTVSSEKTILTLGEYGDVSLLCRVASGVDLAQTIILELDKTAEHLPTAWQVHRDWFNDLALPWKHEGNPHWNNVERLVEFGAPHAVKMDVYNLGDQTGVLLKALAGVPVAHIEGNKYHLKSGHVTCEVGLEKLKMKGLTYTMCDKSKFAWKRTPTDSGHDTVVMEVTFSGSKPCRIPVRAVAHGSPDVNVAMLITPNPTIENDGGGFIEMQLPPGDNIIYVGELSHQWFQTGSSIGRVFQTTRKGIERLTVIGEHAWDFGSAGGFFSSIGKAVHTVLGGAFNSIFGGVGFLPKLLMGVALAWLGLNTRNPTMSMSFLLTGGLVLAMTLGVGA.

Topologically, residues 1–447 (SRCTHLENRD…HTVLGGAFNS (447 aa)) are extracellular. Intrachain disulfides connect Cys3-Cys30, Cys60-Cys116, Cys60-Cys121, Cys74-Cys105, Cys92-Cys116, and Cys92-Cys121. The fusion peptide stretch occupies residues 98–111 (DRGWGNHCGLFGKG). N-linked (GlcNAc...) asparagine; by host glycosylation occurs at Asn154. Disulfide bonds link Cys186–Cys290 and Cys307–Cys338. Residues 448 to 468 (IFGGVGFLPKLLMGVALAWLG) traverse the membrane as a helical segment. At 469–479 (LNTRNPTMSMS) the chain is on the cytoplasmic side. A helical transmembrane segment spans residues 480–496 (FLLTGGLVLAMTLGVGA).

Homodimer; in the endoplasmic reticulum and Golgi. Post-translationally, N-glycosylated.

It is found in the virion membrane. The protein resides in the host endoplasmic reticulum membrane. Its function is as follows. Binds to host cell surface receptor and mediates fusion between viral and cellular membranes. Envelope protein is synthesized in the endoplasmic reticulum in the form of heterodimer with protein prM. They play a role in virion budding in the ER, and the newly formed immature particle is covered with 60 spikes composed of heterodimer between precursor prM and envelope protein E. The virion is transported to the Golgi apparatus where the low pH causes dissociation of PrM-E heterodimers and formation of E homodimers. prM-E cleavage is ineficient, and many virions are only partially matured. These uncleaved prM would play a role in immune evasion. The sequence is that of Genome polyprotein from Bos taurus (Bovine).